Here is a 337-residue protein sequence, read N- to C-terminus: Mitochondrial uncoupling protein 6 (337 aa).

Solcar repeat units follow at residues 4–136 (KPFL…LKRR), 145–236 (FPLV…VKEI), and 246–331 (GGIG…VRGL). 6 helical membrane passes run 6–26 (FLEG…LDLI), 105–125 (PAAL…YSAT), 151–171 (ITAG…ADVA), 210–230 (RGSW…LATY), 252–272 (VAAS…IDVV), and 304–324 (YKGL…LFLT).

It belongs to the mitochondrial carrier (TC 2.A.29) family.

It localises to the mitochondrion inner membrane. Functionally, PUMPS are mitochondrial transporter proteins that create proton leaks across the inner mitochondrial membrane, thus uncoupling oxidative phosphorylation. This leads to a decrease in the efficiency of oxidative phosphorylation and an increase in heat production. May be involved in protecting plant cells against oxidative stress damage. Recombinant PUMP6, reconstituted into liposomes, transports a wide range of dicarboxylic acids including malate, oxaloacetate and succinate as well as phosphate, sulfate and thiosulfate. However, it is unknown if these transports are of any biological significance in vivo. This chain is Mitochondrial uncoupling protein 6 (PUMP6), found in Arabidopsis thaliana (Mouse-ear cress).